The primary structure comprises 475 residues: UDP-glycosyltransferase 708A6 (475 aa).

UDP-alpha-D-glucose-binding positions include Ser286, 348–349 (WV), 366–374 (HCGWNSLTE), and 388–391 (FGDQ).

Belongs to the UDP-glycosyltransferase family. In terms of tissue distribution, expressed in radicles, hypocotyls and juvenile leaves. Expressed at low levels in roots.

Functionally, bifunctional glycosyltransferase that can produce both C- and O-glycosidated flavonoids. Converts 2-hydroxynaringenin to isovitexin. Converts eriodictyol to orientin and isoorientin. Converts naringenin and eriodictyol to naringenin 7-O-glucoside and eriodictyol 7-O-glucoside, respectively. The sequence is that of UDP-glycosyltransferase 708A6 from Zea mays (Maize).